Consider the following 256-residue polypeptide: Small ribosomal subunit protein uS2 (256 aa).

Residues 104-149 (NFKTISQRVHRLEELEALFASPEIEERPKKEQVRLKHELERLQKYL) are a coiled coil.

The protein belongs to the universal ribosomal protein uS2 family. As to quaternary structure, part of the 30S ribosomal subunit. Contacts protein S8.

Spans the head-body hinge region of the 30S subunit. Is loosely associated with the 30S subunit. This is Small ribosomal subunit protein uS2 (rpsB) from Thermus thermophilus (strain ATCC BAA-163 / DSM 7039 / HB27).